We begin with the raw amino-acid sequence, 300 residues long: MKYREIILNIPKEIAEDFTTFLDEIGVAGYYEILFDREVPRAPHEEIISDDTKFRVYLAQEDNENETKILIYLKANAGEVFFSESRWIETKEYEEAYKEFYKPFIVGSYRVIPTWEKDTALGTTPEGIFPLFINPGLAFGTGHHETTRLVLGRMGNLSLSGKKVVDVGTGSGILSVAAAKSGASPILAVDVDPNSVRSASFNRDENDISSEVLAVEEGGFDHEKIQGQTWDLLIANITFAVLKANIQKIVSIKTDHFLFSGVITERLEEFLELLKNEVGGEGVFFQEDTGWELIEWKRKG.

4 residues coordinate S-adenosyl-L-methionine: T147, G168, D190, and N236.

Belongs to the methyltransferase superfamily. PrmA family.

It is found in the cytoplasm. The enzyme catalyses L-lysyl-[protein] + 3 S-adenosyl-L-methionine = N(6),N(6),N(6)-trimethyl-L-lysyl-[protein] + 3 S-adenosyl-L-homocysteine + 3 H(+). Its function is as follows. Methylates ribosomal protein L11. The chain is Ribosomal protein L11 methyltransferase from Leptospira borgpetersenii serovar Hardjo-bovis (strain JB197).